Reading from the N-terminus, the 264-residue chain is 3-methyl-2-oxobutanoate hydroxymethyltransferase (264 aa).

Residues Asp-45 and Asp-84 each coordinate Mg(2+). 3-methyl-2-oxobutanoate is bound by residues 45–46 (DS), Asp-84, and Lys-112. Glu-114 serves as a coordination point for Mg(2+). Residue Glu-181 is the Proton acceptor of the active site.

This sequence belongs to the PanB family. In terms of assembly, homodecamer; pentamer of dimers. The cofactor is Mg(2+).

The protein resides in the cytoplasm. It catalyses the reaction 3-methyl-2-oxobutanoate + (6R)-5,10-methylene-5,6,7,8-tetrahydrofolate + H2O = 2-dehydropantoate + (6S)-5,6,7,8-tetrahydrofolate. It functions in the pathway cofactor biosynthesis; (R)-pantothenate biosynthesis; (R)-pantoate from 3-methyl-2-oxobutanoate: step 1/2. Catalyzes the reversible reaction in which hydroxymethyl group from 5,10-methylenetetrahydrofolate is transferred onto alpha-ketoisovalerate to form ketopantoate. This is 3-methyl-2-oxobutanoate hydroxymethyltransferase from Shigella dysenteriae serotype 1 (strain Sd197).